The chain runs to 274 residues: Large ribosomal subunit protein uL2 (274 aa).

The segment at 223 to 257 (VAMNPVDHPHGGGEGRTSGGRHPVTPWGIPTKGYK) is disordered.

It belongs to the universal ribosomal protein uL2 family. As to quaternary structure, part of the 50S ribosomal subunit. Forms a bridge to the 30S subunit in the 70S ribosome.

Functionally, one of the primary rRNA binding proteins. Required for association of the 30S and 50S subunits to form the 70S ribosome, for tRNA binding and peptide bond formation. It has been suggested to have peptidyltransferase activity; this is somewhat controversial. Makes several contacts with the 16S rRNA in the 70S ribosome. In Geobacter sulfurreducens (strain ATCC 51573 / DSM 12127 / PCA), this protein is Large ribosomal subunit protein uL2.